The sequence spans 281 residues: Protein EMBRYO DEFECTIVE 1674 (281 aa).

2 stretches are compositionally biased toward polar residues: residues 1-14 (MTTTRAKSKFQSLS) and 24-41 (PNTSPSTYSKTLPKPNSS). The interval 1 to 47 (MTTTRAKSKFQSLSACRFTPLPEPNTSPSTYSKTLPKPNSSPGTDGT) is disordered. Residues 66-153 (VTLSDWWLTK…LGFPYDWEDY (88 aa)) enclose the SANTA domain.

Required for normal embryo development. This chain is Protein EMBRYO DEFECTIVE 1674, found in Arabidopsis thaliana (Mouse-ear cress).